The primary structure comprises 365 residues: Tetratricopeptide repeat protein 19, mitochondrial (365 aa).

The N-terminal 52 residues, 1-52 (MFRLLRWRLGRTLLRAAGRRCGGCTARLLPERAGDAGPGAERLRTRGAPARG), are a transit peptide targeting the mitochondrion. TPR repeat units lie at residues 127 to 160 (TYTYDLMANLAFIRGQLENAEQLFKATMSYLLGG), 170 to 203 (VEISLKLANIYAAQNKQEFALAGYEFCISTLEGK), 220 to 260 (ANTY…CQEI), 269 to 302 (IVLMSDLATALDAQGHFDDAYIYMQRASDLAREI), and 308 to 341 (HMVLSNLAAILIHRERYTQAKEIYQEALKQAELK).

Belongs to the TTC19 family. As to quaternary structure, binds to the mature mitochondrial complex III dimer, after the incorporation of the Rieske protein UQCRFS1. Interacts with UQCRC1 and UQCRFS1. Interacts with ZFYVE26 and CHMP4B. Post-translationally, proteolytically cleaved by PARL.

It is found in the mitochondrion inner membrane. Required for the preservation of the structural and functional integrity of mitochondrial respiratory complex III by allowing the physiological turnover of the Rieske protein UQCRFS1. Involved in the clearance of UQCRFS1 N-terminal fragments, which are produced upon incorporation into the complex III and whose presence is detrimental for its catalytic activity. This chain is Tetratricopeptide repeat protein 19, mitochondrial (Ttc19), found in Rattus norvegicus (Rat).